The primary structure comprises 152 residues: Zinc finger SWIM domain-containing protein 7 (152 aa).

An SWIM-type zinc finger spans residues tyrosine 76–leucine 114.

This sequence belongs to the SWS1 family. In terms of assembly, interacts with RAD51D and XRCC3; involved in homologous recombination repair. Interacts with SWSAP1; they form a functional complex involved in homologous recombination repair and stabilize each other.

The protein resides in the nucleus. Involved in early stages of the homologous recombination repair (HRR) pathway of double-stranded DNA breaks arising during DNA replication or induced by DNA-damaging agents. Required for meiotic progression, hence for fertility. This Mus musculus (Mouse) protein is Zinc finger SWIM domain-containing protein 7 (Zswim7).